The sequence spans 346 residues: Ribulose-5-phosphate reductase (346 aa).

The Zn(2+) site is built by C45, H71, E72, and E151.

This sequence belongs to the zinc-containing alcohol dehydrogenase family. It depends on Zn(2+) as a cofactor.

It catalyses the reaction D-ribitol 5-phosphate + NADP(+) = D-ribulose 5-phosphate + NADPH + H(+). It functions in the pathway cell wall biogenesis; poly(ribitol phosphate) teichoic acid biosynthesis. Functionally, catalyzes the NADPH dependent reduction of D-ribulose 5-phosphate to D-ribitol 5-phosphate. The protein is Ribulose-5-phosphate reductase of Streptococcus pneumoniae (strain ATCC BAA-255 / R6).